Here is a 57-residue protein sequence, read N- to C-terminus: NNMLQRQANCNLKVNGCNKIYNPICGSDGITYANECLLCLENKKRQTSILVEKSGPC.

One can recognise a Kazal-like domain in the interval 4–57; the sequence is LQRQANCNLKVNGCNKIYNPICGSDGITYANECLLCLENKKRQTSILVEKSGPC. Intrachain disulfides connect Cys10/Cys39, Cys17/Cys36, and Cys25/Cys57.

The protein resides in the secreted. Functionally, serine protease inhibitor which exhibits anti-trypsin activity. In the pancreas, protects against trypsin-catalyzed premature activation of zymogens. Its function is as follows. In the male reproductive tract, binds to sperm heads where it modulates sperm capacitance by inhibiting calcium uptake and nitrogen oxide (NO) production. The sequence is that of Serine protease inhibitor Kazal-type 1 (SPINK1) from Canis lupus familiaris (Dog).